A 579-amino-acid polypeptide reads, in one-letter code: 2-isopropylmalate synthase (579 aa).

A Pyruvate carboxyltransferase domain is found at 40-314 (PRWCAVDLRD…DPMIDFSDID (275 aa)). Mg(2+)-binding residues include aspartate 49, histidine 253, histidine 255, and asparagine 289. The tract at residues 456-579 (SGKADGQWGR…VNRAIRDAQS (124 aa)) is regulatory domain.

This sequence belongs to the alpha-IPM synthase/homocitrate synthase family. LeuA type 2 subfamily. Homodimer. The cofactor is Mg(2+).

It localises to the cytoplasm. The catalysed reaction is 3-methyl-2-oxobutanoate + acetyl-CoA + H2O = (2S)-2-isopropylmalate + CoA + H(+). Its pathway is amino-acid biosynthesis; L-leucine biosynthesis; L-leucine from 3-methyl-2-oxobutanoate: step 1/4. Its function is as follows. Catalyzes the condensation of the acetyl group of acetyl-CoA with 3-methyl-2-oxobutanoate (2-ketoisovalerate) to form 3-carboxy-3-hydroxy-4-methylpentanoate (2-isopropylmalate). The polypeptide is 2-isopropylmalate synthase (Pseudarthrobacter chlorophenolicus (strain ATCC 700700 / DSM 12829 / CIP 107037 / JCM 12360 / KCTC 9906 / NCIMB 13794 / A6) (Arthrobacter chlorophenolicus)).